Consider the following 317-residue polypeptide: Melanocyte-stimulating hormone receptor (317 aa).

The Extracellular portion of the chain corresponds to 1–37 (MPVLGSQRRLLGSLNCTPPATLPLTLAPNRTGPQCLE). N-linked (GlcNAc...) asparagine glycosylation occurs at Asn29. The chain crosses the membrane as a helical span at residues 38–63 (VSIPDGLFLSLGLVSLVENVLVVAAI). The Cytoplasmic portion of the chain corresponds to 64 to 72 (AKNRNLHSP). Residues 73-93 (MYYFICCLAMSDLLVSVSNVL) form a helical membrane-spanning segment. At 94–118 (ETAVMLLLEAGVLATRAAVVQQLDN) the chain is on the extracellular side. Residues 119 to 140 (VIDVLICSSMVSSLCFLGAIAV) traverse the membrane as a helical segment. Residues 141-163 (DRYISIFYALRYHSVVTLPRAWR) are Cytoplasmic-facing. The helical transmembrane segment at 164–183 (IIAAIWVASILTSVLSITYY) threads the bilayer. Residues 184–191 (NHTVVLLC) lie on the Extracellular side of the membrane. The helical transmembrane segment at 192-211 (LVGFFIAMLALMAVLYVHML) threads the bilayer. Residues 212–240 (ARACQHARGIARLQKRQRPIHQGFGLKGA) lie on the Cytoplasmic side of the membrane. A helical transmembrane segment spans residues 241 to 266 (ATLTILLGVFFLCWGPFFLHLSLIVL). The Extracellular portion of the chain corresponds to 267–279 (CPQHPTCGCIFKN). A helical transmembrane segment spans residues 280 to 300 (FNLFLALIICNAIVDPLIYAF). Residues 301–317 (RSQELRKTLQEVLQCSW) are Cytoplasmic-facing. Cys315 carries S-palmitoyl cysteine lipidation.

The protein belongs to the G-protein coupled receptor 1 family. As to quaternary structure, interacts with MGRN1, but does not undergo MGRN1-mediated ubiquitination; this interaction competes with GNAS-binding and thus inhibits agonist-induced cAMP production. Interacts with OPN3; the interaction results in a decrease in MC1R-mediated cAMP signaling and ultimately a decrease in melanin production in melanocytes.

It is found in the cell membrane. Its function is as follows. Receptor for MSH (alpha, beta and gamma) and ACTH. The activity of this receptor is mediated by G proteins which activate adenylate cyclase. Mediates melanogenesis, the production of eumelanin (black/brown) and phaeomelanin (red/yellow), via regulation of cAMP signaling in melanocytes. In Ovis aries (Sheep), this protein is Melanocyte-stimulating hormone receptor (MC1R).